The sequence spans 195 residues: Probable GTP-binding protein EngB (195 aa).

Residues 22 to 195 (GRPEVALAGR…WAALLPFLTE (174 aa)) enclose the EngB-type G domain. GTP is bound by residues 30 to 37 (GRSNVGKS), 57 to 61 (GKTQT), 75 to 78 (DVPG), 142 to 145 (TKAD), and 174 to 176 (FSS). Positions 37 and 59 each coordinate Mg(2+).

Belongs to the TRAFAC class TrmE-Era-EngA-EngB-Septin-like GTPase superfamily. EngB GTPase family. Mg(2+) serves as cofactor.

Functionally, necessary for normal cell division and for the maintenance of normal septation. The polypeptide is Probable GTP-binding protein EngB (Geobacillus thermodenitrificans (strain NG80-2)).